A 483-amino-acid polypeptide reads, in one-letter code: MGRTLYDKIWDEHVVHTEEDGTSILYIDRHLVHEVTSPQAFEGLREAGRKVWRISSIVATADHNTPTTGWELGYDGITDLVSKEQITTLDANIKEFGAAAFFPFMSKRQGIVHVIGPENGATLPGMTVVCGDSHTSTHGAFGALAHGIGTSEVEHVMATQTLLAKKAKNMLIKVEGAVTKGVTAKDIVLAIIGKIGTAGGTGYTIEFAGSAIRALSMEGRMTVCNMAIEGGARAGLVAVDAKTIEYLKGRLLAPGTDSVTGKFVGGPEWDMAARYWATLHSDADATFDAVVELDASQILPQVSWGTSPEMVLSIEDRVPDPEKEKDANKRGAIERALTYMGLEPGKALNDLYIDKVFIGSCTNSRIEDMREAAAVVKHIGQKVAKNVKLAMVVPGSGLVKEQAEREGLDKIFIAAGFEWREPGCSMCLAMNADRLEPGERCASTSNRNFEGRQGAGGRTHLVSPAMAAAAAVHGHFVDIRKFV.

[4Fe-4S] cluster is bound by residues C361, C424, and C427.

Belongs to the aconitase/IPM isomerase family. LeuC type 1 subfamily. Heterodimer of LeuC and LeuD. The cofactor is [4Fe-4S] cluster.

It carries out the reaction (2R,3S)-3-isopropylmalate = (2S)-2-isopropylmalate. Its pathway is amino-acid biosynthesis; L-leucine biosynthesis; L-leucine from 3-methyl-2-oxobutanoate: step 2/4. Catalyzes the isomerization between 2-isopropylmalate and 3-isopropylmalate, via the formation of 2-isopropylmaleate. The polypeptide is 3-isopropylmalate dehydratase large subunit (Polaromonas naphthalenivorans (strain CJ2)).